Consider the following 319-residue polypeptide: Acetyl-coenzyme A carboxylase carboxyl transferase subunit alpha (319 aa).

The region spanning 35–292 (EISKLMRRLV…KKTIAEALAE (258 aa)) is the CoA carboxyltransferase C-terminal domain.

This sequence belongs to the AccA family. In terms of assembly, acetyl-CoA carboxylase is a heterohexamer composed of biotin carboxyl carrier protein (AccB), biotin carboxylase (AccC) and two subunits each of ACCase subunit alpha (AccA) and ACCase subunit beta (AccD).

Its subcellular location is the cytoplasm. The catalysed reaction is N(6)-carboxybiotinyl-L-lysyl-[protein] + acetyl-CoA = N(6)-biotinyl-L-lysyl-[protein] + malonyl-CoA. Its pathway is lipid metabolism; malonyl-CoA biosynthesis; malonyl-CoA from acetyl-CoA: step 1/1. Component of the acetyl coenzyme A carboxylase (ACC) complex. First, biotin carboxylase catalyzes the carboxylation of biotin on its carrier protein (BCCP) and then the CO(2) group is transferred by the carboxyltransferase to acetyl-CoA to form malonyl-CoA. This Desulfitobacterium hafniense (strain DSM 10664 / DCB-2) protein is Acetyl-coenzyme A carboxylase carboxyl transferase subunit alpha.